The chain runs to 1378 residues: Hybrid signal transduction histidine kinase H (1378 aa).

Residues 212–242 (KEKFKKEELINDFKSRLETLENKIDQRVDER) adopt a coiled-coil conformation. A PAS domain is found at 243-314 (IETRFKYVLE…NNNNNNNNNN (72 aa)). The segment at 294-337 (YQQHNNNNNNNNNNNNNNNNNNNNNSNNKSPIINSPNTTSPTNT) is disordered. Over residues 298–337 (NNNNNNNNNNNNNNNNNNNNNSNNKSPIINSPNTTSPTNT) the composition is skewed to low complexity. Residues 498–805 (TMSHEMRTPL…SFHFLVEVFF (308 aa)) enclose the Histidine kinase domain. Position 501 is a phosphohistidine; by autocatalysis (histidine 501). The span at 663–696 (NNSNNSNNNHNHNNNNNNNNHLNCSGSFNNNGFN) shows a compositional bias: low complexity. Disordered stretches follow at residues 663–717 (NNSN…DKHC), 905–924 (TNNNNSNNDNNNNNTTSTTT), and 1103–1213 (NNSN…HPNP). A compositionally biased stretch (basic residues) spans 697–714 (HGHHHHHHHHHHHHHHHD). Composition is skewed to low complexity over residues 1103 to 1119 (NNSNNNINNNNNNSGSS) and 1136 to 1187 (SPSL…NNNN). Positions 1188-1206 (LNHYNSDSILSSDLSPQQH) are enriched in polar residues. Residues 1244–1364 (KIMVAEDSLV…ILAVELKRAW (121 aa)) form the Response regulatory domain. Aspartate 1297 carries the 4-aspartylphosphate modification.

In terms of processing, activation probably requires transfer of a phosphate group between a histidine in the kinase core (transmitter) domain and an aspartate of the receiver domain.

It carries out the reaction ATP + protein L-histidine = ADP + protein N-phospho-L-histidine.. Acts as a receptor histidine kinase for a signal transduction pathway. This protein undergoes an ATP-dependent autophosphorylation at a conserved histidine residue in the kinase core, and a phosphoryl group is then transferred to a conserved aspartate residue in the receiver domain. The polypeptide is Hybrid signal transduction histidine kinase H (dhkH) (Dictyostelium discoideum (Social amoeba)).